A 396-amino-acid polypeptide reads, in one-letter code: Putative protein IntB (396 aa).

Residues Arg-71 to Val-151 enclose the Core-binding (CB) domain. In terms of domain architecture, Tyr recombinase spans Gln-174–Leu-367. Residues Arg-213, Lys-252, His-316, Arg-319, and His-343 contribute to the active site. Tyr-353 acts as the O-(3'-phospho-DNA)-tyrosine intermediate in catalysis.

This sequence belongs to the 'phage' integrase family.

The protein is Putative protein IntB (intB) of Escherichia coli (strain K12).